The primary structure comprises 269 residues: ATP synthase subunit delta (269 aa).

Belongs to the ATPase delta chain family. As to quaternary structure, F-type ATPases have 2 components, F(1) - the catalytic core - and F(0) - the membrane proton channel. F(1) has five subunits: alpha(3), beta(3), gamma(1), delta(1), epsilon(1). F(0) has three main subunits: a(1), b(2) and c(10-14). The alpha and beta chains form an alternating ring which encloses part of the gamma chain. F(1) is attached to F(0) by a central stalk formed by the gamma and epsilon chains, while a peripheral stalk is formed by the delta and b chains.

The protein resides in the cell membrane. In terms of biological role, f(1)F(0) ATP synthase produces ATP from ADP in the presence of a proton or sodium gradient. F-type ATPases consist of two structural domains, F(1) containing the extramembraneous catalytic core and F(0) containing the membrane proton channel, linked together by a central stalk and a peripheral stalk. During catalysis, ATP synthesis in the catalytic domain of F(1) is coupled via a rotary mechanism of the central stalk subunits to proton translocation. Functionally, this protein is part of the stalk that links CF(0) to CF(1). It either transmits conformational changes from CF(0) to CF(1) or is implicated in proton conduction. The protein is ATP synthase subunit delta of Thermobifida fusca (strain YX).